The sequence spans 144 residues: Large ribosomal subunit protein uL15 (144 aa).

The tract at residues 1–52 (MRLNTLSPAEGAKHSAKRLGRGIGSGLGKTGGRGHKGQKSRTGSGVRRGFEG) is disordered. Positions 21–31 (RGIGSGLGKTG) are enriched in gly residues.

Belongs to the universal ribosomal protein uL15 family. As to quaternary structure, part of the 50S ribosomal subunit.

Its function is as follows. Binds to the 23S rRNA. The chain is Large ribosomal subunit protein uL15 from Haemophilus influenzae (strain 86-028NP).